A 470-amino-acid polypeptide reads, in one-letter code: Acetyl-CoA decarbonylase/synthase complex subunit gamma (470 aa).

In terms of domain architecture, 4Fe-4S spans 1–62; the sequence is MKVKSPLEVY…DPKVKKKLEE (62 aa). [4Fe-4S] cluster contacts are provided by C18, C21, C26, and C43.

Heterodimer of delta and gamma chains. The ACDS complex is made up of alpha, epsilon, beta, gamma and delta chains with a probable stoichiometry of (alpha(2)epsilon(2))(4)-beta(8)-(gamma(1)delta(1))(8). It depends on corrinoid as a cofactor. Requires [4Fe-4S] cluster as cofactor.

It catalyses the reaction 5,6,7,8-tetrahydrosarcinapterin + methyl-Co(III)-[corrinoid Fe-S protein] = 5-methyltetrahydrosarcinapterin + Co(I)-[corrinoid Fe-S protein] + H(+). In terms of biological role, part of a complex that catalyzes the reversible cleavage of acetyl-CoA, allowing autotrophic growth from CO(2). This chain is Acetyl-CoA decarbonylase/synthase complex subunit gamma, found in Archaeoglobus fulgidus (strain ATCC 49558 / DSM 4304 / JCM 9628 / NBRC 100126 / VC-16).